Reading from the N-terminus, the 333-residue chain is Cytosolic sulfotransferase 10 (333 aa).

76 to 81 lines the 3'-phosphoadenylyl sulfate pocket; it reads KSGTTW. The active-site Proton acceptor is the His146. 3'-phosphoadenylyl sulfate contacts are provided by residues Arg168, Ser176, Tyr234, and 299 to 301; that span reads RKG.

It belongs to the sulfotransferase 1 family. Expressed in roots.

It localises to the cytoplasm. Its function is as follows. Sulfotransferase that utilizes 3'-phospho-5'-adenylyl sulfate (PAPS) as sulfonate donor to specifically catalyze the sulfate conjugation of brassinosteroids, including castasterone (CS), brassinolide (BL), related 24-epimers, and the naturally occurring (22R, 23R)-28-homobrassinosteroids. No activity on phenolic acids, desulfo-glucosinolates, flavonoids, steroids, gibberellic acids, cytokinins, phenylpropanoids, hydroxyjasmonates and coumarins. The protein is Cytosolic sulfotransferase 10 (SOT10) of Arabidopsis thaliana (Mouse-ear cress).